We begin with the raw amino-acid sequence, 175 residues long: Inorganic pyrophosphatase (175 aa).

Lys-30, Arg-44, and Tyr-56 together coordinate substrate. 3 residues coordinate Mg(2+): Asp-66, Asp-71, and Asp-103. Tyr-142 is a substrate binding site.

Belongs to the PPase family. As to quaternary structure, homohexamer. Requires Mg(2+) as cofactor.

Its subcellular location is the cytoplasm. It carries out the reaction diphosphate + H2O = 2 phosphate + H(+). In terms of biological role, catalyzes the hydrolysis of inorganic pyrophosphate (PPi) forming two phosphate ions. This Buchnera aphidicola subsp. Baizongia pistaciae (strain Bp) protein is Inorganic pyrophosphatase.